A 126-amino-acid polypeptide reads, in one-letter code: Small ribosomal subunit protein uS13 (126 aa).

Residues L99–K126 form a disordered region. Residues A108–K126 show a composition bias toward basic residues.

The protein belongs to the universal ribosomal protein uS13 family. Part of the 30S ribosomal subunit. Forms a loose heterodimer with protein S19. Forms two bridges to the 50S subunit in the 70S ribosome.

In terms of biological role, located at the top of the head of the 30S subunit, it contacts several helices of the 16S rRNA. In the 70S ribosome it contacts the 23S rRNA (bridge B1a) and protein L5 of the 50S subunit (bridge B1b), connecting the 2 subunits; these bridges are implicated in subunit movement. Contacts the tRNAs in the A and P-sites. The protein is Small ribosomal subunit protein uS13 of Azobacteroides pseudotrichonymphae genomovar. CFP2.